The primary structure comprises 82 residues: Defensin-like protein 7 (82 aa).

A signal peptide spans 1 to 29 (MKSSTTSMQLIPTLFFLTILLASPEMVEG). Residue Q30 is modified to Pyrrolidone carboxylic acid. 4 disulfide bridges follow: C33–C77, C44–C64, C50–C71, and C54–C73.

It belongs to the DEFL family. Expressed in stems, roots, rosette leaves and flower buds.

It is found in the secreted. The chain is Defensin-like protein 7 (LCR75) from Arabidopsis thaliana (Mouse-ear cress).